Consider the following 428-residue polypeptide: CinA-like protein (428 aa).

This sequence belongs to the CinA family.

The sequence is that of CinA-like protein from Gemmatimonas aurantiaca (strain DSM 14586 / JCM 11422 / NBRC 100505 / T-27).